A 440-amino-acid polypeptide reads, in one-letter code: Putative short-chain fatty acid transporter (440 aa).

The Periplasmic portion of the chain corresponds to 1–19; it reads MIGRISRFMTRFVSRWLPD. Residues 20–40 traverse the membrane as a helical segment; the sequence is PLIFAMLLTLLTFVIALWLTP. At 41–53 the chain is on the cytoplasmic side; that stretch reads QTPISMVKMWGDG. A helical membrane pass occupies residues 54–74; it reads FWNLLAFGMQMALIIVTGHAL. Topologically, residues 75–102 are periplasmic; sequence ASSAPVKSLLRTAASAAKTPVQGVMLVT. The helical transmembrane segment at 103–123 threads the bilayer; that stretch reads FFGSVACVINWGFGLVVGAMF. Topologically, residues 124 to 137 are cytoplasmic; the sequence is AREVARRVPGSDYP. 2 helical membrane-spanning segments follow: residues 138 to 158 and 159 to 179; these read LLIACAYIGFLTWGGGFSGSM and PLLAATPGNPVEHIAGLIPVG. Residue Asp180 is a topological domain, cytoplasmic. The helical transmembrane segment at 181–201 threads the bilayer; it reads TLFSGFNIFITVALIVVMPFI. Topologically, residues 202–244 are periplasmic; the sequence is TRMMMPKPSDVVSIDPKLLMEEADFQKQLPKDAPPSERLEESR. 2 helical membrane passes run 245 to 265 and 266 to 286; these read ILTLIIGALGIAYLAMYFSEH and GFNITINTVNLMFMIAGLLLH. At 287–313 the chain is on the periplasmic side; that stretch reads KTPMAYMRAISAAARSTAGILVQFPFY. Residues 314–334 form a helical membrane-spanning segment; sequence AGIQLMMEHSGLGGLITEFFI. Residues 335–351 are Cytoplasmic-facing; that stretch reads NVANKDTFPVMTFFSSA. Residues 352–372 form a helical membrane-spanning segment; the sequence is LINFAVPSGGGHWVIQGPFVI. Over 373–394 the chain is Periplasmic; the sequence is PAAQALGADLGKSVMAIAYGEQ. The chain crosses the membrane as a helical span at residues 395–415; the sequence is WMNMAQPFWALPALAIAGLGV. Topologically, residues 416 to 419 are cytoplasmic; it reads RDIM. Residues 420 to 440 form a helical membrane-spanning segment; sequence GYCITALLFSGVIFVIGLTLF.

It localises to the cell inner membrane. In terms of biological role, may be responsible for the uptake of short-chain fatty acids. The sequence is that of Putative short-chain fatty acid transporter (atoE) from Escherichia coli (strain K12).